We begin with the raw amino-acid sequence, 457 residues long: uncharacterized protein (457 aa).

Residues 1 to 18 form the signal peptide; the sequence is MKLLISLLWSIFFSIVYS. Topologically, residues 19-173 are lumenal; that stretch reads EKTLLNFKHY…GGLPASQFPR (155 aa). The chain crosses the membrane as a helical span at residues 174-194; sequence MPISGGITIAYSVILALWMFF. Over 195–207 the chain is Cytoplasmic; that stretch reads RFQYKHSIVTVQK. The chain crosses the membrane as a helical span at residues 208–228; it reads AIMFLLIFSCAQQAVTSIVLD. The Lumenal portion of the chain corresponds to 229 to 243; that stretch reads TENLRNRGNFTWLGE. The chain crosses the membrane as a helical span at residues 244–264; it reads TLVSILFACQLVLDLALLLIL. Residues 265-284 lie on the Cytoplasmic side of the membrane; sequence SWGYTRYSTNMRDRLFTEAK. A helical transmembrane segment spans residues 285–305; the sequence is IPLIICFFALFVVRFFAITIQ. At 306–314 the chain is on the lumenal side; sequence SIHLGLWFC. A helical transmembrane segment spans residues 315-335; sequence FFFLTACISALYILFGAFVAL. Residues 336 to 358 lie on the Cytoplasmic side of the membrane; it reads PSTLRALVEQRYYTLHSIYKIFR. A helical membrane pass occupies residues 359 to 379; the sequence is IMVLCGVVTIFSFSLVALIFC. The Lumenal segment spans residues 380–457; that stretch reads SNTNNNSTNK…EEDIRADKSK (78 aa).

Belongs to the LU7TM family.

It localises to the endoplasmic reticulum membrane. This is an uncharacterized protein from Schizosaccharomyces pombe (strain 972 / ATCC 24843) (Fission yeast).